We begin with the raw amino-acid sequence, 536 residues long: MTKFIFVTGGVVSSLGKGITASSLGRLLKDRGLNVTIQKFDPYLNVDPGTMSPYQHGEVFVTDDGAETDLDLGHYERFIDINLNKFSNVTAGKVYSHVLKKERRGDYLGGTVQVIPHITNEIKERLLLAGESTNADVVITEIGGTTGDIESLPFIEAIRQIRSDLGRENVMYVHCTLLPYIKAAGEMKTKPTQHSVKELRGLGIQPDLIVVRTEYEMTQDLKDKIALFCDINKESVIECRDADSLYEIPLQLSQQNMDDIVIKRLQLNAKYETQLDEWKQLLDIVNNLDGKITIGLVGKYVSLQDAYLSVVESLKHAGYPFAKDIDIRWIDSSEVTDENAAEYLADVDGILVPGGFGFRASEGKISAIKYARENNVPFFGICLGMQLATVEFSRNVLGLEGAHSAELDPATPYPIIDLLPEQKDIEDLGGTLRLGLYSCSIKEGTLAQDVYGKAEIEERHRHRYEFNNDYREQLEANGMVISGTSPDGRLVEMVEIPTNDFFIACQFHPEFLSRPNRPHPIFKSFIEASLKYQQNK.

An amidoligase domain region spans residues 1-267 (MTKFIFVTGG…DDIVIKRLQL (267 aa)). A CTP-binding site is contributed by S13. Position 13 (S13) interacts with UTP. An ATP-binding site is contributed by 14–19 (SLGKGI). Y54 lines the L-glutamine pocket. D71 is a binding site for ATP. Mg(2+) contacts are provided by D71 and E141. CTP-binding positions include 148 to 150 (DIE), 188 to 193 (KTKPTQ), and K224. Residues 188-193 (KTKPTQ) and K224 each bind UTP. 240–242 (RDA) serves as a coordination point for ATP. The Glutamine amidotransferase type-1 domain occupies 293-535 (TIGLVGKYVS…IEASLKYQQN (243 aa)). G355 is a binding site for L-glutamine. C382 serves as the catalytic Nucleophile; for glutamine hydrolysis. Residues 383–386 (LGMQ), E406, and R463 contribute to the L-glutamine site. Residues H508 and E510 contribute to the active site.

This sequence belongs to the CTP synthase family. As to quaternary structure, homotetramer.

It carries out the reaction UTP + L-glutamine + ATP + H2O = CTP + L-glutamate + ADP + phosphate + 2 H(+). It catalyses the reaction L-glutamine + H2O = L-glutamate + NH4(+). The enzyme catalyses UTP + NH4(+) + ATP = CTP + ADP + phosphate + 2 H(+). The protein operates within pyrimidine metabolism; CTP biosynthesis via de novo pathway; CTP from UDP: step 2/2. Allosterically activated by GTP, when glutamine is the substrate; GTP has no effect on the reaction when ammonia is the substrate. The allosteric effector GTP functions by stabilizing the protein conformation that binds the tetrahedral intermediate(s) formed during glutamine hydrolysis. Inhibited by the product CTP, via allosteric rather than competitive inhibition. Its function is as follows. Catalyzes the ATP-dependent amination of UTP to CTP with either L-glutamine or ammonia as the source of nitrogen. Regulates intracellular CTP levels through interactions with the four ribonucleotide triphosphates. The protein is CTP synthase of Staphylococcus aureus (strain NCTC 8325 / PS 47).